Reading from the N-terminus, the 469-residue chain is MSAKPTTLYDKIWNDHLVHEAEDGTCLLYIDRHLVHEVTSPQAFEGLRTAGRKVHAPEKTLAVVDHNVPTTDRSKPNPDPESAEQIAALAENARDFGITYYNEFDKRQGVVHVIGPEQGFTLPGTTIVCGDSHTSTHGAFGALAHGIGTSEVEHVLATQTLIQKKAKNMRVTVDGQLPDGVTAKDVILAIIGEIGTAGGTGYVLEYAGDAIRSLSMEGRMTVCNMSIEGGARAGLIAPDERAYEFLKGRPLAPKGAAWDAALRYWDTLRSDDGAHFDHELKLDAAALPPIVTWGTSPEDVISVTGRVPNPADIADEAKRLSKERALAYMGLTPGTKITDIKIDRMFIGSCTNGRIEDLRAAAKVAEGKTVNANVNAIIVPGSGLVKEQAEAEGLDKIFIKAGFEWREPGCSMCLAMNPDKLAPEERCASTSNRNFEGRQGFKGRTHLVSPAMAAAAAIAGHFVDIRDWH.

Residues Cys350, Cys410, and Cys413 each contribute to the [4Fe-4S] cluster site.

Belongs to the aconitase/IPM isomerase family. LeuC type 1 subfamily. In terms of assembly, heterodimer of LeuC and LeuD. The cofactor is [4Fe-4S] cluster.

The catalysed reaction is (2R,3S)-3-isopropylmalate = (2S)-2-isopropylmalate. It participates in amino-acid biosynthesis; L-leucine biosynthesis; L-leucine from 3-methyl-2-oxobutanoate: step 2/4. In terms of biological role, catalyzes the isomerization between 2-isopropylmalate and 3-isopropylmalate, via the formation of 2-isopropylmaleate. In Rhodopseudomonas palustris (strain ATCC BAA-98 / CGA009), this protein is 3-isopropylmalate dehydratase large subunit.